The primary structure comprises 396 residues: Elongation factor Tu 2 (396 aa).

The region spanning 10 to 206 is the tr-type G domain; it reads KPHINVGTIG…VLDSYIPEPQ (197 aa). Positions 19 to 26 are G1; that stretch reads GHVDHGKT. 19–26 provides a ligand contact to GTP; it reads GHVDHGKT. Mg(2+) is bound at residue Thr26. The interval 60 to 64 is G2; sequence GITIN. A G3 region spans residues 81 to 84; that stretch reads DCPG. GTP contacts are provided by residues 81-85 and 136-139; these read DCPGH and NKAD. The segment at 136–139 is G4; the sequence is NKAD. A G5 region spans residues 174 to 176; the sequence is SAL.

Belongs to the TRAFAC class translation factor GTPase superfamily. Classic translation factor GTPase family. EF-Tu/EF-1A subfamily. Monomer.

It localises to the cytoplasm. The enzyme catalyses GTP + H2O = GDP + phosphate + H(+). GTP hydrolase that promotes the GTP-dependent binding of aminoacyl-tRNA to the A-site of ribosomes during protein biosynthesis. This Nitrosomonas eutropha (strain DSM 101675 / C91 / Nm57) protein is Elongation factor Tu 2.